An 837-amino-acid chain; its full sequence is Protein translocase subunit SecA (837 aa).

Residues Gln83, Gly101–Thr105, and Asp494 each bind ATP.

This sequence belongs to the SecA family. Monomer and homodimer. Part of the essential Sec protein translocation apparatus which comprises SecA, SecYEG and auxiliary proteins SecDF. Other proteins may also be involved.

It is found in the cell membrane. The protein resides in the cytoplasm. It carries out the reaction ATP + H2O + cellular proteinSide 1 = ADP + phosphate + cellular proteinSide 2.. In terms of biological role, part of the Sec protein translocase complex. Interacts with the SecYEG preprotein conducting channel. Has a central role in coupling the hydrolysis of ATP to the transfer of proteins into and across the cell membrane, serving as an ATP-driven molecular motor driving the stepwise translocation of polypeptide chains across the membrane. This is Protein translocase subunit SecA from Ureaplasma parvum serovar 3 (strain ATCC 27815 / 27 / NCTC 11736).